A 208-amino-acid polypeptide reads, in one-letter code: Guanylate kinase (208 aa).

The Guanylate kinase-like domain occupies 4-185 (GNLYILSAPS…ALADFQAILR (182 aa)). 11–18 (APSGAGKS) is an ATP binding site.

The protein belongs to the guanylate kinase family.

It localises to the cytoplasm. The enzyme catalyses GMP + ATP = GDP + ADP. In terms of biological role, essential for recycling GMP and indirectly, cGMP. This chain is Guanylate kinase (gmk), found in Pasteurella multocida (strain Pm70).